The following is a 261-amino-acid chain: MGKAFSQLTSQKDEDKSILPDNPAMASKAANYFSTGNRKPSHSCVPCEKAASTSFVTCPTCQGNGEIPQELEKQLVALIPYGDQRLKPRRTKLSVFLAVTICLLIFSLTIFFLYPRNIVVHPVGLNSSTVAFDETHVQLNMTNVLNITNSNFYPVTVTQLTAEVLHQTSVVGQVTSSLRLHIGPLASKQMPYEVASRILDENTYKICTWPKIRVHHILVNIQGALTCSYLTHPQQLPFESFEYVDCRENMSMPHLELPRPA.

Residues M1–S10 show a composition bias toward polar residues. The disordered stretch occupies residues M1–N22. Residues L93–L113 traverse the membrane as a helical segment.

The protein belongs to the TMEM106 family.

It localises to the cell membrane. Activates macrophages and polarizes them into M1-like macrophages through the activation of the MAPK and NF-kappaB signaling pathway. Upon activation, up-regulates the expression of CD80, CD86, CD69 and MHC II on macrophages, and induces the release of pro-inflammatory cytokines such as TNF, IL1B, IL6, CCL2 and nitric oxide. May play a role in inhibition of proliferation and migration. In Rattus norvegicus (Rat), this protein is Transmembrane protein 106A (Tmem106a).